The primary structure comprises 159 residues: MQITIITVGKLKEKYLKQGIAEYTKRLGAYCSIQEIEVPDEKAPEQLSDAEMQQVKKKEGERILAKIGPDVHVYALAIEGKQRTSEQFATELDRLATYGKSKIAFVIGGSLGLAPEVMQRANDTISFSKMTFPHQLMKMILCEQIYRAYRINRNEPYHK.

S-adenosyl-L-methionine is bound by residues leucine 76, glycine 108, and 127–132; that span reads FSKMTF.

It belongs to the RNA methyltransferase RlmH family. In terms of assembly, homodimer.

It localises to the cytoplasm. It carries out the reaction pseudouridine(1915) in 23S rRNA + S-adenosyl-L-methionine = N(3)-methylpseudouridine(1915) in 23S rRNA + S-adenosyl-L-homocysteine + H(+). Functionally, specifically methylates the pseudouridine at position 1915 (m3Psi1915) in 23S rRNA. In Exiguobacterium sibiricum (strain DSM 17290 / CCUG 55495 / CIP 109462 / JCM 13490 / 255-15), this protein is Ribosomal RNA large subunit methyltransferase H.